A 151-amino-acid polypeptide reads, in one-letter code: Large ribosomal subunit protein uL23m (151 aa).

Positions 120 to 143 are enriched in basic and acidic residues; sequence DDKKSLEDAKKNHKKFLDKNKDRP. The disordered stretch occupies residues 120–151; that stretch reads DDKKSLEDAKKNHKKFLDKNKDRPGTPGWFSI.

It belongs to the universal ribosomal protein uL23 family. As to quaternary structure, component of the mitochondrial ribosome large subunit (39S) which comprises a 16S rRNA and about 50 distinct proteins.

It localises to the mitochondrion. The polypeptide is Large ribosomal subunit protein uL23m (mRpL23) (Anopheles gambiae (African malaria mosquito)).